The following is a 324-amino-acid chain: 4-hydroxy-3-methylbut-2-enyl diphosphate reductase (324 aa).

C13 is a [4Fe-4S] cluster binding site. (2E)-4-hydroxy-3-methylbut-2-enyl diphosphate is bound by residues H41 and H75. 2 residues coordinate dimethylallyl diphosphate: H41 and H75. H41 and H75 together coordinate isopentenyl diphosphate. A [4Fe-4S] cluster-binding site is contributed by C97. H125 contacts (2E)-4-hydroxy-3-methylbut-2-enyl diphosphate. H125 lines the dimethylallyl diphosphate pocket. H125 provides a ligand contact to isopentenyl diphosphate. E127 functions as the Proton donor in the catalytic mechanism. Residue T168 participates in (2E)-4-hydroxy-3-methylbut-2-enyl diphosphate binding. Position 225 (C225) interacts with [4Fe-4S] cluster. (2E)-4-hydroxy-3-methylbut-2-enyl diphosphate is bound by residues S253, S254, N255, and S302. Dimethylallyl diphosphate-binding residues include S253, S254, N255, and S302. Positions 253, 254, 255, and 302 each coordinate isopentenyl diphosphate.

Belongs to the IspH family. It depends on [4Fe-4S] cluster as a cofactor.

The catalysed reaction is isopentenyl diphosphate + 2 oxidized [2Fe-2S]-[ferredoxin] + H2O = (2E)-4-hydroxy-3-methylbut-2-enyl diphosphate + 2 reduced [2Fe-2S]-[ferredoxin] + 2 H(+). It carries out the reaction dimethylallyl diphosphate + 2 oxidized [2Fe-2S]-[ferredoxin] + H2O = (2E)-4-hydroxy-3-methylbut-2-enyl diphosphate + 2 reduced [2Fe-2S]-[ferredoxin] + 2 H(+). It functions in the pathway isoprenoid biosynthesis; dimethylallyl diphosphate biosynthesis; dimethylallyl diphosphate from (2E)-4-hydroxy-3-methylbutenyl diphosphate: step 1/1. It participates in isoprenoid biosynthesis; isopentenyl diphosphate biosynthesis via DXP pathway; isopentenyl diphosphate from 1-deoxy-D-xylulose 5-phosphate: step 6/6. Functionally, catalyzes the conversion of 1-hydroxy-2-methyl-2-(E)-butenyl 4-diphosphate (HMBPP) into a mixture of isopentenyl diphosphate (IPP) and dimethylallyl diphosphate (DMAPP). Acts in the terminal step of the DOXP/MEP pathway for isoprenoid precursor biosynthesis. This chain is 4-hydroxy-3-methylbut-2-enyl diphosphate reductase, found in Chlorobium limicola (strain DSM 245 / NBRC 103803 / 6330).